Reading from the N-terminus, the 376-residue chain is MSKRDYYEVLGAAKDASAQDLKKAYRRLAMKYHPDRNPDDKEALAKFKEAKEAYEVLADEQKRAAYDQFGHAGVNGQGGGPGAGAGAGGFGDIFGDIFGDIFGGAGGGGGRRGPSRGADLRYTLELSLEQAVRGCDEKIRIPTWDSCDVCHGSGAKEGSQPVTCTTCGGVGQVRMQQGFFTVQQACPTCKGEGKIIKDPCGNCGGQGRVQNTKTLSVKIPAGVDTGDRIRLAGEGEAGVHGAPSGDLYVQVAVREHDIFQRDGDNLYCEVPISFVDATLGGELDVPTLNGKVKLKVPAETQSGKLFRLRGKGVAPVRGGAPGDLLCKVVIETPVKLSSEQKELLRKFQESLESGGNRHNPRKNNWFEGVKRFFDTK.

The J domain occupies 5-70; it reads DYYEVLGAAK…QKRAAYDQFG (66 aa). The segment at 134 to 212 adopts a CR-type zinc-finger fold; the sequence is GCDEKIRIPT…CGGQGRVQNT (79 aa). The Zn(2+) site is built by Cys-147, Cys-150, Cys-164, Cys-167, Cys-186, Cys-189, Cys-200, and Cys-203. 4 CXXCXGXG motif repeats span residues 147–154, 164–171, 186–193, and 200–207; these read CDVCHGSG, CTTCGGVG, CPTCKGEG, and CGNCGGQG.

The protein belongs to the DnaJ family. Homodimer. The cofactor is Zn(2+).

Its subcellular location is the cytoplasm. Its function is as follows. Participates actively in the response to hyperosmotic and heat shock by preventing the aggregation of stress-denatured proteins and by disaggregating proteins, also in an autonomous, DnaK-independent fashion. Unfolded proteins bind initially to DnaJ; upon interaction with the DnaJ-bound protein, DnaK hydrolyzes its bound ATP, resulting in the formation of a stable complex. GrpE releases ADP from DnaK; ATP binding to DnaK triggers the release of the substrate protein, thus completing the reaction cycle. Several rounds of ATP-dependent interactions between DnaJ, DnaK and GrpE are required for fully efficient folding. Also involved, together with DnaK and GrpE, in the DNA replication of plasmids through activation of initiation proteins. The sequence is that of Chaperone protein DnaJ from Alcanivorax borkumensis (strain ATCC 700651 / DSM 11573 / NCIMB 13689 / SK2).